Here is a 435-residue protein sequence, read N- to C-terminus: MLDLKAVAADFESFERRLARRGEGAVQALAPVKPLAARRRELNVLLEKQKKEQADANARIRELARTDKGAVEGARASLRALGDEVKKTEAELGEVEAELTRLLMLVPNPPHDSVPDGKDEHDNVVVKTWGEQKAYGFTPKPHWEVGEALGVLEWQQAAKLSGSRFTILKGAAARLERAIVSFFIDVHTSRGYTEILPPYLVTGETMTGTGQLPKFEEDLFKTTNEPPMYLIPTAEVPVTNMHRDEIFEASAMPVSYCAFSPCFRAEAGSAGRDTRGIMRQHQFHKVELVKLSKAEESYAEHEKMLDDACEVLRRLGLHHRVSLLCTGDMGFSSAKTYDIEVWCPGQGAYREISSVSNCEDFQARRIRVRYRGENGKPRLAHTLNGSGVAVGRTIVAILEQCQEADGTVVIPEPLRPYMGGLERIAAETFPRGVER.

233 to 235 serves as a coordination point for L-serine; that stretch reads TAE. Residue 264–266 coordinates ATP; sequence RAE. Position 287 (Glu287) interacts with L-serine. 351–354 lines the ATP pocket; the sequence is EISS. L-serine is bound at residue Ser386.

It belongs to the class-II aminoacyl-tRNA synthetase family. Type-1 seryl-tRNA synthetase subfamily. In terms of assembly, homodimer. The tRNA molecule binds across the dimer.

Its subcellular location is the cytoplasm. It carries out the reaction tRNA(Ser) + L-serine + ATP = L-seryl-tRNA(Ser) + AMP + diphosphate + H(+). The enzyme catalyses tRNA(Sec) + L-serine + ATP = L-seryl-tRNA(Sec) + AMP + diphosphate + H(+). It functions in the pathway aminoacyl-tRNA biosynthesis; selenocysteinyl-tRNA(Sec) biosynthesis; L-seryl-tRNA(Sec) from L-serine and tRNA(Sec): step 1/1. Catalyzes the attachment of serine to tRNA(Ser). Is also able to aminoacylate tRNA(Sec) with serine, to form the misacylated tRNA L-seryl-tRNA(Sec), which will be further converted into selenocysteinyl-tRNA(Sec). This Anaeromyxobacter dehalogenans (strain 2CP-C) protein is Serine--tRNA ligase.